The chain runs to 556 residues: 2-succinyl-5-enolpyruvyl-6-hydroxy-3-cyclohexene-1-carboxylate synthase (556 aa).

It belongs to the TPP enzyme family. MenD subfamily. As to quaternary structure, homodimer. The cofactor is Mg(2+). Mn(2+) serves as cofactor. Thiamine diphosphate is required as a cofactor.

The enzyme catalyses isochorismate + 2-oxoglutarate + H(+) = 5-enolpyruvoyl-6-hydroxy-2-succinyl-cyclohex-3-ene-1-carboxylate + CO2. Its pathway is quinol/quinone metabolism; 1,4-dihydroxy-2-naphthoate biosynthesis; 1,4-dihydroxy-2-naphthoate from chorismate: step 2/7. It functions in the pathway quinol/quinone metabolism; menaquinone biosynthesis. In terms of biological role, catalyzes the thiamine diphosphate-dependent decarboxylation of 2-oxoglutarate and the subsequent addition of the resulting succinic semialdehyde-thiamine pyrophosphate anion to isochorismate to yield 2-succinyl-5-enolpyruvyl-6-hydroxy-3-cyclohexene-1-carboxylate (SEPHCHC). The chain is 2-succinyl-5-enolpyruvyl-6-hydroxy-3-cyclohexene-1-carboxylate synthase from Salmonella paratyphi B (strain ATCC BAA-1250 / SPB7).